The primary structure comprises 702 residues: Phosphoglycerol transferase I (702 aa).

3 helical membrane passes run 2-22, 71-91, and 103-123; these read HWIL…SPRL, FSGY…PLML, and GGAV…VSPV.

This sequence belongs to the OpgB family.

It localises to the cell inner membrane. The catalysed reaction is a phosphatidylglycerol + a membrane-derived-oligosaccharide D-glucose = a 1,2-diacyl-sn-glycerol + a membrane-derived-oligosaccharide 6-(glycerophospho)-D-glucose.. It participates in glycan metabolism; osmoregulated periplasmic glucan (OPG) biosynthesis. Its function is as follows. Transfers a phosphoglycerol residue from phosphatidylglycerol to the membrane-bound nascent glucan backbones. The chain is Phosphoglycerol transferase I from Xanthomonas campestris pv. campestris (strain B100).